A 307-amino-acid chain; its full sequence is MRHFLTLKDFSAQEILEILALSKEIKDDLKKGIRPPLMQGKVLGMIFEKSSTRTRVSFESGIYQLGGMGMFLSNRDIQLGRGEPMKDTARVISRMVDMVMIRTSGHERIEEFAKYSQVPVVNGLTDSYHPVQLMADYLTMMEQGKDQNPIVAYVGDGNNMTHSWLMLASKLGFELRVATPRGYEPNLKIFEEAQKIASLSGAKITLTNDPKRAVEGADVVTTDTWASMGQEEEKEKRARDFQGYCVDSALMGLAKSDAIFLHCLPAYRGQEVSEEVLEGPQSLIFDEAENRLHVQKGIMVWLDRKRS.

Carbamoyl phosphate is bound by residues 51-54, Q78, R102, and 129-132; these read STRT and HPVQ. L-ornithine is bound by residues N159, D223, and 227–228; that span reads SM. Carbamoyl phosphate-binding positions include 263–264 and R291; that span reads CL.

The protein belongs to the aspartate/ornithine carbamoyltransferase superfamily. OTCase family.

It is found in the cytoplasm. The catalysed reaction is carbamoyl phosphate + L-ornithine = L-citrulline + phosphate + H(+). Its pathway is amino-acid biosynthesis; L-arginine biosynthesis; L-arginine from L-ornithine and carbamoyl phosphate: step 1/3. Functionally, reversibly catalyzes the transfer of the carbamoyl group from carbamoyl phosphate (CP) to the N(epsilon) atom of ornithine (ORN) to produce L-citrulline. The protein is Ornithine carbamoyltransferase of Wolinella succinogenes (strain ATCC 29543 / DSM 1740 / CCUG 13145 / JCM 31913 / LMG 7466 / NCTC 11488 / FDC 602W) (Vibrio succinogenes).